A 160-amino-acid polypeptide reads, in one-letter code: 2-C-methyl-D-erythritol 2,4-cyclodiphosphate synthase (160 aa).

The a divalent metal cation site is built by D10 and H12. 4-CDP-2-C-methyl-D-erythritol 2-phosphate contacts are provided by residues 10–12 (DVH) and 36–37 (HS). H44 is an a divalent metal cation binding site. 4-CDP-2-C-methyl-D-erythritol 2-phosphate is bound by residues 58-60 (DIG), 63-67 (FPDTD), 102-108 (AQAPKML), 134-137 (TTTE), F141, and R144.

It belongs to the IspF family. In terms of assembly, homotrimer. Requires a divalent metal cation as cofactor.

The enzyme catalyses 4-CDP-2-C-methyl-D-erythritol 2-phosphate = 2-C-methyl-D-erythritol 2,4-cyclic diphosphate + CMP. It participates in isoprenoid biosynthesis; isopentenyl diphosphate biosynthesis via DXP pathway; isopentenyl diphosphate from 1-deoxy-D-xylulose 5-phosphate: step 4/6. Functionally, involved in the biosynthesis of isopentenyl diphosphate (IPP) and dimethylallyl diphosphate (DMAPP), two major building blocks of isoprenoid compounds. Catalyzes the conversion of 4-diphosphocytidyl-2-C-methyl-D-erythritol 2-phosphate (CDP-ME2P) to 2-C-methyl-D-erythritol 2,4-cyclodiphosphate (ME-CPP) with a corresponding release of cytidine 5-monophosphate (CMP). This is 2-C-methyl-D-erythritol 2,4-cyclodiphosphate synthase from Shewanella amazonensis (strain ATCC BAA-1098 / SB2B).